Consider the following 2841-residue polypeptide: Neurofibromin (2841 aa).

Ala-2 is subject to N-acetylalanine. Ser-866 and Ser-878 each carry phosphoserine. The Ras-GAP domain maps to 1253 to 1484; it reads HLLYQLLWNM…DLARRFFLDI (232 aa). Residues 1582–1740 enclose the CRAL-TRIO domain; it reads EKEEFKALKT…ATLALEEDLK (159 aa). Positions 1582–1839 are lipid binding; that stretch reads EKEEFKALKT…RTRWELSQPD (258 aa). A phosphoserine mark is found at Ser-2190 and Ser-2469. Position 2516 is a phosphothreonine (Thr-2516). Phosphoserine is present on residues Ser-2517, Ser-2523, Ser-2525, and Ser-2545. The short motif at 2557–2573 is the Bipartite nuclear localization signal element; that stretch reads KRQEMESGITTPPKMRR. Position 2567 is a phosphothreonine (Thr-2567). Phosphoserine occurs at positions 2599, 2804, and 2819. The tract at residues 2786–2841 is disordered; that stretch reads SLATSQHSPGLDKENVELSPTAGHCNSGRTRHGSASQVQKQRSAGSFKRNSIKKIV. The span at 2818–2829 shows a compositional bias: polar residues; the sequence is GSASQVQKQRSA.

In terms of assembly, interacts with HTR6. Interacts with SPRED2. Ubiquitinated by RNF7/RBX2, leading to its degradation. In terms of tissue distribution, expressed predominantly in brain, spinal cord and testis. As to expression, expressed predominantly in adrenal gland, kidney, ovary and lung. Widely and more weakly expressed. Predominantly expressed in adrenal gland. In terms of tissue distribution, widely and more weakly expressed. Expressed mainly in testis.

It is found in the nucleus. The protein resides in the nucleolus. The protein localises to the cell membrane. In terms of biological role, stimulates the GTPase activity of Ras. NF1 shows greater affinity for Ras GAP, but lower specific activity. May be a regulator of Ras activity. The polypeptide is Neurofibromin (Nf1) (Mus musculus (Mouse)).